The chain runs to 188 residues: dCTP deaminase (188 aa).

DCTP is bound by residues 111–116 (KSTYAR), 135–137 (TLE), Q156, Y170, and Q180. The active-site Proton donor/acceptor is the E137.

Belongs to the dCTP deaminase family. Homotrimer.

The catalysed reaction is dCTP + H2O + H(+) = dUTP + NH4(+). It participates in pyrimidine metabolism; dUMP biosynthesis; dUMP from dCTP (dUTP route): step 1/2. Its function is as follows. Catalyzes the deamination of dCTP to dUTP. The sequence is that of dCTP deaminase from Acidovorax sp. (strain JS42).